We begin with the raw amino-acid sequence, 402 residues long: UDP-glucose 6-dehydrogenase (402 aa).

NAD(+) is bound by residues 2 to 19 (KIAVAGSGYVGLSLGVLL), valine 11, aspartate 29, lysine 34, threonine 83, threonine 118, and glutamate 145. Substrate is bound by residues 141–145 (EFLRE), lysine 204, asparagine 208, 249–253 (YNNPS), and glycine 257. Tyrosine 259 is a binding site for NAD(+). Residue cysteine 260 is the Nucleophile of the active site. Lysine 263 is an NAD(+) binding site. Lysine 320 contacts substrate. Residue arginine 327 participates in NAD(+) binding.

This sequence belongs to the UDP-glucose/GDP-mannose dehydrogenase family.

The enzyme catalyses UDP-alpha-D-glucose + 2 NAD(+) + H2O = UDP-alpha-D-glucuronate + 2 NADH + 3 H(+). The protein operates within nucleotide-sugar biosynthesis; UDP-alpha-D-glucuronate biosynthesis; UDP-alpha-D-glucuronate from UDP-alpha-D-glucose: step 1/1. Its function is as follows. Catalyzes the formation of UDP-glucuronic acid which is required for capsular hyaluronic acid synthesis. The polypeptide is UDP-glucose 6-dehydrogenase (hasB) (Streptococcus pyogenes serotype M18 (strain MGAS8232)).